The primary structure comprises 101 residues: uncharacterized protein (101 aa).

Residues 1–25 (MISIPFRSTMSRTLVFIILPTVLSC) form the signal peptide.

This is an uncharacterized protein from Saccharomyces cerevisiae (strain ATCC 204508 / S288c) (Baker's yeast).